The chain runs to 593 residues: Capsid protein 1 (593 aa).

The protein belongs to the NCLDV major capsid protein family.

It localises to the virion. This Acanthamoeba polyphaga mimivirus (APMV) protein is Capsid protein 1.